A 104-amino-acid polypeptide reads, in one-letter code: Large ribosomal subunit protein uL23 (104 aa).

Belongs to the universal ribosomal protein uL23 family. As to quaternary structure, part of the 50S ribosomal subunit. Contacts protein L29, and trigger factor when it is bound to the ribosome.

Functionally, one of the early assembly proteins it binds 23S rRNA. One of the proteins that surrounds the polypeptide exit tunnel on the outside of the ribosome. Forms the main docking site for trigger factor binding to the ribosome. This is Large ribosomal subunit protein uL23 from Nostoc sp. (strain PCC 7120 / SAG 25.82 / UTEX 2576).